The chain runs to 543 residues: Organic anion transporter 3 (543 aa).

The Cytoplasmic portion of the chain corresponds to 1–21 (MTFAELVDRVGSKGPFQLLHT). Residues 22–42 (VLLGLPILGMANHNLLQIFTA) form a helical membrane-spanning segment. Residues 43 to 124 (PTPAHHCRPP…LVCSSSKLKE (82 aa)) are Extracellular-facing. N-linked (GlcNAc...) asparagine glycosylation is present at N81. The helical transmembrane segment at 125–145 (MAQSVFMAGILVGGLVLGALS) threads the bilayer. Residues 146–151 (DRFGRK) are Cytoplasmic-facing. Residues 152–172 (PILIFSYLLLGASGSGAAFSP) form a helical membrane-spanning segment. Over 173 to 181 (TFSIYAVFR) the chain is Extracellular. A helical membrane pass occupies residues 182 to 202 (FLCGFSISGISLSTAILNVEW). Topologically, residues 203–212 (VSTRFRAIKS) are cytoplasmic. A helical transmembrane segment spans residues 213 to 233 (IAVGFFYTFGQFILPGLAYAI). Residues 234–237 (PQWR) are Extracellular-facing. The helical transmembrane segment at 238–258 (WLQLTVSVPFLTFFLLSWWLP) threads the bilayer. At 259–328 (ESIRWMVLSG…FRTPVLRRVT (70 aa)) the chain is on the cytoplasmic side. The helical transmembrane segment at 329–349 (LCLSLAWFATGFAYYSLAMGV) threads the bilayer. At 350–355 (EEFGVN) the chain is on the extracellular side. The chain crosses the membrane as a helical span at residues 356–376 (LYVLQLIFGGVDVPAKFITML). At 377-388 (SISYLGRHITEG) the chain is on the cytoplasmic side. A helical transmembrane segment spans residues 389–409 (IVLLLAGGCILALIFVPLDLM). At 410 to 412 (TLR) the chain is on the extracellular side. A helical transmembrane segment spans residues 413–433 (TVLAVFGKGCLSGSFSCLFLY). Topologically, residues 434–472 (TSELYPTVIRQTGMGASNLWARVGSMTAPLVKITGELQP) are cytoplasmic. A helical transmembrane segment spans residues 473-493 (FIPNIIFGTIALLGGSAALFL). Over 494–543 (PETLNRPLPETIEDIETWSLRAKEPKPEPEAEKSSQRIPLQPCEPGPGPS) the chain is Extracellular. The disordered stretch occupies residues 513–543 (LRAKEPKPEPEAEKSSQRIPLQPCEPGPGPS). The span at 514–528 (RAKEPKPEPEAEKSS) shows a compositional bias: basic and acidic residues.

This sequence belongs to the major facilitator (TC 2.A.1) superfamily. Organic cation transporter (TC 2.A.1.19) family. Expressed in kidney.

Its subcellular location is the basolateral cell membrane. The enzyme catalyses estrone 3-sulfate(out) + glutarate(in) = estrone 3-sulfate(in) + glutarate(out). The catalysed reaction is estrone 3-sulfate(in) + 2-oxoglutarate(out) = estrone 3-sulfate(out) + 2-oxoglutarate(in). It catalyses the reaction glutarate(in) + 2-oxoglutarate(out) = glutarate(out) + 2-oxoglutarate(in). It carries out the reaction urate(in) + 2-oxoglutarate(out) = urate(out) + 2-oxoglutarate(in). The enzyme catalyses taurocholate(out) + glutarate(in) = taurocholate(in) + glutarate(out). The catalysed reaction is dehydroepiandrosterone 3-sulfate(out) + glutarate(in) = dehydroepiandrosterone 3-sulfate(in) + glutarate(out). It catalyses the reaction prostaglandin F2alpha(out) + glutarate(in) = prostaglandin F2alpha(in) + glutarate(out). It carries out the reaction prostaglandin F2alpha(out) + 2-oxoglutarate(in) = prostaglandin F2alpha(in) + 2-oxoglutarate(out). The enzyme catalyses (R)-carnitine(out) + 2-oxoglutarate(in) = (R)-carnitine(in) + 2-oxoglutarate(out). The catalysed reaction is glutarate(in) + (R)-carnitine(out) = glutarate(out) + (R)-carnitine(in). It catalyses the reaction prostaglandin E2(out) + 2-oxoglutarate(in) = prostaglandin E2(in) + 2-oxoglutarate(out). It carries out the reaction prostaglandin E2(out) + glutarate(in) = prostaglandin E2(in) + glutarate(out). The enzyme catalyses urate(in) + glutarate(out) = urate(out) + glutarate(in). The catalysed reaction is taurocholate(out) + 2-oxoglutarate(in) = taurocholate(in) + 2-oxoglutarate(out). It catalyses the reaction dehydroepiandrosterone 3-sulfate(out) + 2-oxoglutarate(in) = dehydroepiandrosterone 3-sulfate(in) + 2-oxoglutarate(out). It carries out the reaction kynurenate(out) + a dicarboxylate(in) = kynurenate(in) + a dicarboxylate(out). The enzyme catalyses (indol-3-yl)acetate(out) + a dicarboxylate(in) = (indol-3-yl)acetate(in) + a dicarboxylate(out). The catalysed reaction is indoxyl sulfate(out) + a dicarboxylate(in) = indoxyl sulfate(in) + a dicarboxylate(out). It catalyses the reaction N-benzoylglycine(out) + a dicarboxylate(in) = N-benzoylglycine(in) + a dicarboxylate(out). It carries out the reaction 3-carboxy-4-methyl-5-propyl-2-furanpropanoate(out) + a dicarboxylate(in) = 3-carboxy-4-methyl-5-propyl-2-furanpropanoate(in) + a dicarboxylate(out). The enzyme catalyses (6R)-L-erythro-5,6,7,8-tetrahydrobiopterin(out) + a dicarboxylate(in) = (6R)-L-erythro-5,6,7,8-tetrahydrobiopterin(in) + a dicarboxylate(out). The catalysed reaction is L-erythro-7,8-dihydrobiopterin(out) + a dicarboxylate(in) = L-erythro-7,8-dihydrobiopterin(in) + a dicarboxylate(out). It catalyses the reaction L-sepiapterin(out) + a dicarboxylate(in) = L-sepiapterin(in) + a dicarboxylate(out). Functions as an organic anion/dicarboxylate exchanger that couples organic anion uptake indirectly to the sodium gradient. Transports organic anions such as estrone 3-sulfate (E1S) and urate in exchange for dicarboxylates such as glutarate or ketoglutarate (2-oxoglutarate). Plays an important role in the excretion of endogenous and exogenous organic anions, especially from the kidney and the brain. E1S transport is pH- and chloride-dependent and may also involve E1S/cGMP exchange. Responsible for the transport of prostaglandin E2 (PGE2) and prostaglandin F2(alpha) (PGF2(alpha)) in the basolateral side of the renal tubule. Involved in the transport of neuroactive tryptophan metabolites kynurenate and xanthurenate. Functions as a biopterin transporters involved in the uptake and the secretion of coenzymes tetrahydrobiopterin (BH4), dihydrobiopterin (BH2) and sepiapterin to urine, thereby determining baseline levels of blood biopterins. May be involved in the basolateral transport of steviol, a metabolite of the popular sugar substitute stevioside. May participate in the detoxification/ renal excretion of drugs and xenobiotics, such as the histamine H(2)-receptor antagonists fexofenadine and cimetidine, the antibiotic benzylpenicillin (PCG), the anionic herbicide 2,4-dichloro-phenoxyacetate (2,4-D), the diagnostic agent p-aminohippurate (PAH), the antiviral acyclovir (ACV), and the mycotoxin ochratoxin (OTA), by transporting these exogenous organic anions across the cell membrane in exchange for dicarboxylates such as 2-oxoglutarate. Contributes to the renal uptake of potent uremic toxins (indoxyl sulfate (IS), indole acetate (IA), hippurate/N-benzoylglycine (HA) and 3-carboxy-4-methyl-5-propyl-2-furanpropionate (CMPF)), pravastatin, PCG, E1S and dehydroepiandrosterone sulfate (DHEAS), and is partly involved in the renal uptake of temocaprilat (an angiotensin-converting enzyme (ACE) inhibitor). May contribute to the release of cortisol in the adrenals. Involved in one of the detoxification systems on the choroid plexus (CP), removes substrates such as E1S or taurocholate (TC), PCG, 2,4-D and PAH, from the cerebrospinal fluid (CSF) to the blood for eventual excretion in urine and bile. Also contributes to the uptake of several other organic compounds such as the prostanoids prostaglandin E(2) and prostaglandin F(2-alpha), L-carnitine, and the therapeutic drugs allopurinol, 6-mercaptopurine (6-MP) and 5-fluorouracil (5-FU). Mediates the transport of PAH, PCG, and the statins pravastatin and pitavastatin, from the cerebrum into the blood circulation across the blood-brain barrier (BBB). In summary, plays a role in the efflux of drugs and xenobiotics, helping reduce their undesired toxicological effects on the body. The chain is Organic anion transporter 3 (SLC22A8) from Sus scrofa (Pig).